Reading from the N-terminus, the 463-residue chain is Glutamate--tRNA ligase 2 (463 aa).

The 'HIGH' region motif lies at 11-21; that stretch reads PSPTGYLHIGG. The 'KMSKS' region signature appears at 240 to 244; it reads KLSKR. Residue lysine 243 participates in ATP binding.

This sequence belongs to the class-I aminoacyl-tRNA synthetase family. Glutamate--tRNA ligase type 1 subfamily. As to quaternary structure, monomer.

It is found in the cytoplasm. It catalyses the reaction tRNA(Glu) + L-glutamate + ATP = L-glutamyl-tRNA(Glu) + AMP + diphosphate. Catalyzes the attachment of glutamate to tRNA(Glu) in a two-step reaction: glutamate is first activated by ATP to form Glu-AMP and then transferred to the acceptor end of tRNA(Glu). The protein is Glutamate--tRNA ligase 2 of Campylobacter jejuni subsp. jejuni serotype O:2 (strain ATCC 700819 / NCTC 11168).